The primary structure comprises 341 residues: HTH-type transcriptional repressor CytR (341 aa).

Residues 10 to 64 form the HTH lacI-type domain; sequence ATMKDVALKAKVSTATVSRALMNPDKVSQATRNRVEKAAREVGYLPQPMGRNVKR. The H-T-H motif DNA-binding region spans 12-31; the sequence is MKDVALKAKVSTATVSRALM.

Functionally, this protein negatively controls the transcription initiation of genes such as deoCABD, udp, and cdd encoding catabolizing enzymes and nupC, nupG, and tsx encoding transporting and pore-forming proteins. Binds cytidine and adenosine as effectors. The sequence is that of HTH-type transcriptional repressor CytR (cytR) from Escherichia coli (strain K12).